The sequence spans 184 residues: MDTILLETEERMEKAVAALDREFGRLRTGRASTSLVDSIKVDYYGTPTPINQLASVAVPDSRTITIQPWDRGAFALVEKAIMQSDLGLTPINDGKIIRISMPPLTEERRKELVKVAKKYTEDAKVAVRNIRRDANEQIKKMEKDKAITEDDMKRGQDEVQKLTDAFVAKSEKVLAKKEKEIMEV.

The protein belongs to the RRF family.

Its subcellular location is the cytoplasm. Functionally, responsible for the release of ribosomes from messenger RNA at the termination of protein biosynthesis. May increase the efficiency of translation by recycling ribosomes from one round of translation to another. This is Ribosome-recycling factor from Oleidesulfovibrio alaskensis (strain ATCC BAA-1058 / DSM 17464 / G20) (Desulfovibrio alaskensis).